The chain runs to 73 residues: Salivary thrombin inhibitor XC-42 (73 aa).

An N-terminal signal peptide occupies residues Met-1–Ala-23.

As to quaternary structure, interacts with human F2 (thrombin). As to expression, salivary gland (at protein level).

It is found in the secreted. In terms of biological role, acts as a competitive inhibitor of host thrombin. This Xenopsylla cheopis (Oriental rat flea) protein is Salivary thrombin inhibitor XC-42.